Consider the following 227-residue polypeptide: Monoamine regulon transcriptional regulator (227 aa).

In terms of domain architecture, HTH luxR-type spans 155-220 (EDDLPAILTA…ELVSRTWMPA (66 aa)). The segment at residues 179–198 (NKLIARQLDISLSTVKTHLR) is a DNA-binding region (H-T-H motif).

Positive regulatory protein for the induction of arylsulfatase synthesis (maoA), tyramine oxidase (tynA), maoC, maoE/F operon, and atsB/A operon which are all regulated by monoamines, and included under the common term of monoamine regulon. The polypeptide is Monoamine regulon transcriptional regulator (moaR) (Klebsiella aerogenes (Enterobacter aerogenes)).